We begin with the raw amino-acid sequence, 357 residues long: Selenide, water dikinase (357 aa).

Cysteine 25 is a catalytic residue. Residues lysine 28 and 57-59 (TAD) each bind ATP. Aspartate 60 lines the Mg(2+) pocket. Residues aspartate 77, aspartate 100, and 148–150 (GHS) contribute to the ATP site. Aspartate 100 contacts Mg(2+). Aspartate 236 lines the Mg(2+) pocket.

The protein belongs to the selenophosphate synthase 1 family. Class I subfamily. Homodimer. The cofactor is Mg(2+).

The enzyme catalyses hydrogenselenide + ATP + H2O = selenophosphate + AMP + phosphate + 2 H(+). Synthesizes selenophosphate from selenide and ATP. This is Selenide, water dikinase from Pseudomonas straminea.